The chain runs to 347 residues: Protein RecA (347 aa).

Glycine 67 to threonine 74 serves as a coordination point for ATP.

It belongs to the RecA family.

The protein resides in the cytoplasm. Functionally, can catalyze the hydrolysis of ATP in the presence of single-stranded DNA, the ATP-dependent uptake of single-stranded DNA by duplex DNA, and the ATP-dependent hybridization of homologous single-stranded DNAs. It interacts with LexA causing its activation and leading to its autocatalytic cleavage. This Helicobacter acinonychis (strain Sheeba) protein is Protein RecA.